The primary structure comprises 309 residues: Probable manganese-dependent inorganic pyrophosphatase (309 aa).

Positions 9, 13, 15, 75, 97, and 149 each coordinate Mn(2+).

Belongs to the PPase class C family. It depends on Mn(2+) as a cofactor.

The protein localises to the cytoplasm. It carries out the reaction diphosphate + H2O = 2 phosphate + H(+). The chain is Probable manganese-dependent inorganic pyrophosphatase from Staphylococcus saprophyticus subsp. saprophyticus (strain ATCC 15305 / DSM 20229 / NCIMB 8711 / NCTC 7292 / S-41).